The chain runs to 158 residues: Small ribosomal subunit protein uS7 (158 aa).

It belongs to the universal ribosomal protein uS7 family. Part of the 30S ribosomal subunit. Contacts proteins S9 and S11.

Functionally, one of the primary rRNA binding proteins, it binds directly to 16S rRNA where it nucleates assembly of the head domain of the 30S subunit. Is located at the subunit interface close to the decoding center, probably blocks exit of the E-site tRNA. This is Small ribosomal subunit protein uS7 from Parabacteroides distasonis (strain ATCC 8503 / DSM 20701 / CIP 104284 / JCM 5825 / NCTC 11152).